Consider the following 131-residue polypeptide: Glycine cleavage system H protein (131 aa).

Residues Thr-24 to Gln-106 form the Lipoyl-binding domain. Position 65 is an N6-lipoyllysine (Lys-65).

It belongs to the GcvH family. In terms of assembly, the glycine cleavage system is composed of four proteins: P, T, L and H. The cofactor is (R)-lipoate.

Functionally, the glycine cleavage system catalyzes the degradation of glycine. The H protein shuttles the methylamine group of glycine from the P protein to the T protein. In Mycolicibacterium vanbaalenii (strain DSM 7251 / JCM 13017 / BCRC 16820 / KCTC 9966 / NRRL B-24157 / PYR-1) (Mycobacterium vanbaalenii), this protein is Glycine cleavage system H protein.